Consider the following 79-residue polypeptide: MAQQRRGGFKRRKKFDYIAANKIEYVDYKDTELLSRFVSERGKILPRRVTGTSAKNQRKVTTAIKRARVMALMPYVNED.

This sequence belongs to the bacterial ribosomal protein bS18 family. Part of the 30S ribosomal subunit. Forms a tight heterodimer with protein bS6.

Functionally, binds as a heterodimer with protein bS6 to the central domain of the 16S rRNA, where it helps stabilize the platform of the 30S subunit. The sequence is that of Small ribosomal subunit protein bS18 from Streptococcus thermophilus (strain CNRZ 1066).